The sequence spans 613 residues: Pescadillo homolog (613 aa).

The stretch at 259-344 (KELSNELETK…MKQIEHDIIX (86 aa)) forms a coiled coil. The tract at residues 268–333 (KESTEDNIIE…KNDQKNDQKN (66 aa)) is disordered. Positions 278–333 (ENEKKTKNGKTENCEKNDQENEKKTKNDKTKNCEKNDQKNDQKNDQKNDQKNDQKN) are enriched in basic and acidic residues. A BRCT domain is found at 350-453 (SVKNLFKNHI…MILSCEDYNI (104 aa)). A disordered region spans residues 485 to 517 (LSEDPQYNKSIQKNKTNSENKXNNYNDNENDMS). Residues 492 to 601 (NKSIQKNKTN…ENRQKLTIEK (110 aa)) are a coiled coil. The segment covering 497 to 511 (KNKTNSENKXNNYND) has biased composition (low complexity).

This sequence belongs to the pescadillo family.

The protein localises to the nucleus. The protein resides in the nucleolus. It is found in the nucleoplasm. In terms of biological role, required for maturation of ribosomal RNAs and formation of the large ribosomal subunit. This is Pescadillo homolog from Plasmodium yoelii yoelii.